The chain runs to 335 residues: Beta-ketoacyl-[acyl-carrier-protein] synthase III 2 (335 aa).

Catalysis depends on residues Cys116 and His256. Residues 257-261 (QANVR) form an ACP-binding region. The active site involves Asn286.

It belongs to the thiolase-like superfamily. FabH family. Homodimer.

The protein resides in the cytoplasm. It carries out the reaction malonyl-[ACP] + acetyl-CoA + H(+) = 3-oxobutanoyl-[ACP] + CO2 + CoA. The protein operates within lipid metabolism; fatty acid biosynthesis. Its function is as follows. Catalyzes the condensation reaction of fatty acid synthesis by the addition to an acyl acceptor of two carbons from malonyl-ACP. Catalyzes the first condensation reaction which initiates fatty acid synthesis and may therefore play a role in governing the total rate of fatty acid production. Possesses both acetoacetyl-ACP synthase and acetyl transacylase activities. Its substrate specificity determines the biosynthesis of branched-chain and/or straight-chain of fatty acids. In Bacteroides thetaiotaomicron (strain ATCC 29148 / DSM 2079 / JCM 5827 / CCUG 10774 / NCTC 10582 / VPI-5482 / E50), this protein is Beta-ketoacyl-[acyl-carrier-protein] synthase III 2.